Consider the following 274-residue polypeptide: 3',5'-cyclic adenosine monophosphate phosphodiesterase CpdA (274 aa).

Positions 21, 23, 63, 93, 163, 202, and 204 each coordinate Fe cation. AMP contacts are provided by residues histidine 23, aspartate 63, and 93–94 (NH). Histidine 204 serves as a coordination point for AMP.

Belongs to the cyclic nucleotide phosphodiesterase class-III family. Fe(2+) serves as cofactor.

It carries out the reaction 3',5'-cyclic AMP + H2O = AMP + H(+). Hydrolyzes cAMP to 5'-AMP. Plays an important regulatory role in modulating the intracellular concentration of cAMP, thereby influencing cAMP-dependent processes. May coordinate responses to nutritional stress, ensuring optimal competence development. The sequence is that of 3',5'-cyclic adenosine monophosphate phosphodiesterase CpdA from Haemophilus influenzae (strain ATCC 51907 / DSM 11121 / KW20 / Rd).